A 588-amino-acid polypeptide reads, in one-letter code: ATP-dependent lipid A-core flippase (588 aa).

A run of 6 helical transmembrane segments spans residues 23–43, 56–76, 141–161, 162–182, 257–277, and 278–298; these read FWPV…IDAG, FITI…IGIT, DALT…TVMM, VICW…GIIV, LVIA…STVI, and TISA…IKPM. One can recognise an ABC transmembrane type-1 domain in the interval 28–310; that stretch reads LLGVLANILY…LTTLNATIQR (283 aa). Residues 342–576 form the ABC transporter domain; sequence IEFKHVYHAY…DGHYAQLYKV (235 aa). Position 375–382 (375–382) interacts with ATP; the sequence is GHSGSGKT.

The protein belongs to the ABC transporter superfamily. Lipid exporter (TC 3.A.1.106) family. As to quaternary structure, homodimer.

The protein resides in the cell inner membrane. It catalyses the reaction ATP + H2O + lipid A-core oligosaccharideSide 1 = ADP + phosphate + lipid A-core oligosaccharideSide 2.. Involved in lipopolysaccharide (LPS) biosynthesis. Translocates lipid A-core from the inner to the outer leaflet of the inner membrane. Transmembrane domains (TMD) form a pore in the inner membrane and the ATP-binding domain (NBD) is responsible for energy generation. The polypeptide is ATP-dependent lipid A-core flippase (Legionella pneumophila subsp. pneumophila (strain Philadelphia 1 / ATCC 33152 / DSM 7513)).